The primary structure comprises 135 residues: Auxin-responsive protein SAUR66 (135 aa).

This sequence belongs to the ARG7 family.

It localises to the cell membrane. May promote auxin-stimulated organ elongation, such as hypocotyls, stamen filaments and petals. This Arabidopsis thaliana (Mouse-ear cress) protein is Auxin-responsive protein SAUR66.